The following is a 163-amino-acid chain: Ribonuclease H (163 aa).

The 142-residue stretch at 1-142 (MRKQVAIFTD…CDELARTAAC (142 aa)) folds into the RNase H type-1 domain. Positions 10, 48, 70, and 134 each coordinate Mg(2+).

This sequence belongs to the RNase H family. As to quaternary structure, monomer. The cofactor is Mg(2+).

It localises to the cytoplasm. It catalyses the reaction Endonucleolytic cleavage to 5'-phosphomonoester.. Endonuclease that specifically degrades the RNA of RNA-DNA hybrids. This is Ribonuclease H from Sodalis glossinidius (strain morsitans).